The primary structure comprises 745 residues: MEVKRLKVTELRSELQRRGLDSRGLKMDLAQRLQEALDAEMLEDEAGVGGAGPGGACKAEPRPVAASGGGPGGDEEEEDDDEEEDEEALLEDEDEEPPPAQALGQAAQPPPEPPETSAMEAESEASDTPAEATAGSGGVNGGEEHDNGKGEEDGPEERSGDETPGSEAPGDKAVEEQGDDQDSEKSKPAGSDGERRGVKRQRDEKDEHGRAYYEFREEAYHSRSKSPPPPEEEAKDEEEDQTLVNLDTYTSDLHFQISKDRYGGQPLFSEKFPTLWSGARSTYGVTKGKVCFEAKVTQNLPMKEGCTEVSLLRVGWSVDFSCSQLGEDEFSYGFDGRGLKAENGQFEEFGQTFGENDVIGCFANFETEEVELSFSKNGEDLGVAFRISKESLADRALLPHVLCKNCVVELNFGQKEEPFFPPPEEFVFIHAVPVEERVRTAVPPKTIEECEVILMVGLPGSGKTQWALKYAKDNPERRYNVLGAETVLTQMRMKGLEEPEMDPKSRDLLVQQASQCLSKLVQIASRSKRNFILDQCNVYNSGQRRKLLLFKTFSRKVVVVVPNEEDWKRRLELRKEVEGDDVPESIMLEMKANFSLPEKCDYMDEVTYGELEKEEAQPIVTKYKEEARKLLPPSEKRTNRRNNRNKRNRQNRSRGQGYVGGQRRGYDNRAYGQQYWGQSGNRGGYRNFYDRYRGDYERFYSRDYEYNRYRDYYRQYNRDWQNYYYHHQQDRDRYYRNYYGYQGYR.

One can recognise an SAP domain in the interval 3–37 (VKRLKVTELRSELQRRGLDSRGLKMDLAQRLQEAL). Disordered regions lie at residues 44-239 (DEAG…DEEE) and 625-664 (EEAR…GQRR). Positions 73–97 (GDEEEEDDDEEEDEEALLEDEDEEP) are enriched in acidic residues. A compositionally biased stretch (basic and acidic residues) spans 142 to 161 (GEEHDNGKGEEDGPEERSGD). A Phosphoserine modification is found at serine 159. Residue threonine 163 is modified to Phosphothreonine. Serine 166, serine 183, serine 186, serine 224, and serine 226 each carry phosphoserine. Basic and acidic residues predominate over residues 183–221 (SEKSKPAGSDGERRGVKRQRDEKDEHGRAYYEFREEAYH). The B30.2/SPRY domain maps to 224–417 (SKSPPPPEEE…VELNFGQKEE (194 aa)). Acidic residues predominate over residues 230–239 (PEEEAKDEEE). The segment covering 625 to 637 (EEARKLLPPSEKR) has biased composition (basic and acidic residues). Over residues 638–652 (TNRRNNRNKRNRQNR) the composition is skewed to basic residues. Omega-N-methylarginine occurs at positions 654, 682, 736, and 745.

As to quaternary structure, binds to MLF1 and retains it in the nucleus.

Its subcellular location is the nucleus. This Mus musculus (Mouse) protein is Heterogeneous nuclear ribonucleoprotein U-like protein 2 (Hnrnpul2).